Here is a 295-residue protein sequence, read N- to C-terminus: Phosphatidylserine decarboxylase proenzyme (295 aa).

Catalysis depends on charge relay system; for autoendoproteolytic cleavage activity residues D113, H169, and S256. The active-site Schiff-base intermediate with substrate; via pyruvic acid; for decarboxylase activity is S256. S256 is subject to Pyruvic acid (Ser); by autocatalysis.

It belongs to the phosphatidylserine decarboxylase family. PSD-B subfamily. Prokaryotic type II sub-subfamily. Heterodimer of a large membrane-associated beta subunit and a small pyruvoyl-containing alpha subunit. It depends on pyruvate as a cofactor. Is synthesized initially as an inactive proenzyme. Formation of the active enzyme involves a self-maturation process in which the active site pyruvoyl group is generated from an internal serine residue via an autocatalytic post-translational modification. Two non-identical subunits are generated from the proenzyme in this reaction, and the pyruvate is formed at the N-terminus of the alpha chain, which is derived from the carboxyl end of the proenzyme. The autoendoproteolytic cleavage occurs by a canonical serine protease mechanism, in which the side chain hydroxyl group of the serine supplies its oxygen atom to form the C-terminus of the beta chain, while the remainder of the serine residue undergoes an oxidative deamination to produce ammonia and the pyruvoyl prosthetic group on the alpha chain. During this reaction, the Ser that is part of the protease active site of the proenzyme becomes the pyruvoyl prosthetic group, which constitutes an essential element of the active site of the mature decarboxylase.

The protein localises to the cell membrane. It carries out the reaction a 1,2-diacyl-sn-glycero-3-phospho-L-serine + H(+) = a 1,2-diacyl-sn-glycero-3-phosphoethanolamine + CO2. Its pathway is phospholipid metabolism; phosphatidylethanolamine biosynthesis; phosphatidylethanolamine from CDP-diacylglycerol: step 2/2. Functionally, catalyzes the formation of phosphatidylethanolamine (PtdEtn) from phosphatidylserine (PtdSer). This chain is Phosphatidylserine decarboxylase proenzyme, found in Clostridium botulinum (strain 657 / Type Ba4).